The chain runs to 443 residues: ATP-dependent protease ATPase subunit HslU (443 aa).

ATP contacts are provided by residues isoleucine 20, 62 to 67, aspartate 255, glutamate 321, and arginine 393; that span reads GVGKTE.

It belongs to the ClpX chaperone family. HslU subfamily. In terms of assembly, a double ring-shaped homohexamer of HslV is capped on each side by a ring-shaped HslU homohexamer. The assembly of the HslU/HslV complex is dependent on binding of ATP.

Its subcellular location is the cytoplasm. Functionally, ATPase subunit of a proteasome-like degradation complex; this subunit has chaperone activity. The binding of ATP and its subsequent hydrolysis by HslU are essential for unfolding of protein substrates subsequently hydrolyzed by HslV. HslU recognizes the N-terminal part of its protein substrates and unfolds these before they are guided to HslV for hydrolysis. The protein is ATP-dependent protease ATPase subunit HslU of Helicobacter pylori (strain HPAG1).